The chain runs to 413 residues: ORC1-type DNA replication protein 10 (413 aa).

ATP-binding positions include 63-67 (VGKTA), Tyr-211, and Arg-223.

The protein belongs to the CDC6/cdc18 family.

Functionally, involved in regulation of DNA replication. The protein is ORC1-type DNA replication protein 10 (orc10) of Halobacterium salinarum (strain ATCC 700922 / JCM 11081 / NRC-1) (Halobacterium halobium).